A 251-amino-acid chain; its full sequence is tRNA pseudouridine synthase A (251 aa).

The Nucleophile role is filled by Asp-26. Tyr-98 contacts substrate.

This sequence belongs to the tRNA pseudouridine synthase TruA family. Homodimer.

The enzyme catalyses uridine(38/39/40) in tRNA = pseudouridine(38/39/40) in tRNA. In terms of biological role, formation of pseudouridine at positions 38, 39 and 40 in the anticodon stem and loop of transfer RNAs. In Mycolicibacterium paratuberculosis (strain ATCC BAA-968 / K-10) (Mycobacterium paratuberculosis), this protein is tRNA pseudouridine synthase A.